The following is a 256-amino-acid chain: Thiazole synthase (256 aa).

K95 serves as the catalytic Schiff-base intermediate with DXP. Residues G156, 182-183, and 204-205 each bind 1-deoxy-D-xylulose 5-phosphate; these read AG and NT.

This sequence belongs to the ThiG family. Homotetramer. Forms heterodimers with either ThiH or ThiS.

The protein localises to the cytoplasm. The enzyme catalyses [ThiS sulfur-carrier protein]-C-terminal-Gly-aminoethanethioate + 2-iminoacetate + 1-deoxy-D-xylulose 5-phosphate = [ThiS sulfur-carrier protein]-C-terminal Gly-Gly + 2-[(2R,5Z)-2-carboxy-4-methylthiazol-5(2H)-ylidene]ethyl phosphate + 2 H2O + H(+). The protein operates within cofactor biosynthesis; thiamine diphosphate biosynthesis. Its function is as follows. Catalyzes the rearrangement of 1-deoxy-D-xylulose 5-phosphate (DXP) to produce the thiazole phosphate moiety of thiamine. Sulfur is provided by the thiocarboxylate moiety of the carrier protein ThiS. In vitro, sulfur can be provided by H(2)S. This chain is Thiazole synthase, found in Shigella dysenteriae serotype 1 (strain Sd197).